We begin with the raw amino-acid sequence, 119 residues long: Membrane-anchored ubiquitin-fold protein 3 (119 aa).

Residues 8-76 (IEVKFRLFDG…NNRTLAESRV (69 aa)) enclose the Ubiquitin-like domain. The residue at position 116 (Cys116) is a Cysteine methyl ester. The S-geranylgeranyl cysteine moiety is linked to residue Cys116. Residues 117 to 119 (TIL) constitute a propeptide, removed in mature form.

Its subcellular location is the cell membrane. In terms of biological role, may serve as docking site to facilitate the association of other proteins to the plasma membrane. The chain is Membrane-anchored ubiquitin-fold protein 3 (MUB3) from Oryza sativa subsp. japonica (Rice).